The sequence spans 681 residues: Threonine--tRNA ligase (681 aa).

A TGS domain is found at 3–97 (KQIQVTLPDG…EEDVQLALLT (95 aa)). The tract at residues 279–576 (DHRVLGKQLD…LIEHYAGAFP (298 aa)) is catalytic. Positions 372, 423, and 553 each coordinate Zn(2+).

This sequence belongs to the class-II aminoacyl-tRNA synthetase family. Homodimer. It depends on Zn(2+) as a cofactor.

Its subcellular location is the cytoplasm. The catalysed reaction is tRNA(Thr) + L-threonine + ATP = L-threonyl-tRNA(Thr) + AMP + diphosphate + H(+). Its function is as follows. Catalyzes the attachment of threonine to tRNA(Thr) in a two-step reaction: L-threonine is first activated by ATP to form Thr-AMP and then transferred to the acceptor end of tRNA(Thr). Also edits incorrectly charged L-seryl-tRNA(Thr). The chain is Threonine--tRNA ligase from Acidobacterium capsulatum (strain ATCC 51196 / DSM 11244 / BCRC 80197 / JCM 7670 / NBRC 15755 / NCIMB 13165 / 161).